We begin with the raw amino-acid sequence, 124 residues long: Fluoride-specific ion channel FluC 2 (124 aa).

The next 4 membrane-spanning stretches (helical) occupy residues 1 to 21, 36 to 58, 63 to 85, and 104 to 124; these read MNFL…YAIT, SNLP…FIFG, VFIY…TMNT, and LSSY…AILF. Positions 75 and 78 each coordinate Na(+).

The protein belongs to the fluoride channel Fluc/FEX (TC 1.A.43) family. In terms of assembly, heterodimer composed of FluC1 and FluC2. Neither FluC1 nor FluC2 alone catalyzes fluoride efflux from liposomes.

Its subcellular location is the cell membrane. It carries out the reaction fluoride(in) = fluoride(out). Its activity is regulated as follows. Na(+) is not transported, but it plays an essential structural role and its presence is essential for fluoride channel function. Fluoride-specific ion channel. Important for reducing fluoride concentration in the cell, thus reducing its toxicity. The protein is Fluoride-specific ion channel FluC 2 of Lactobacillus acidophilus (strain ATCC 700396 / NCK56 / N2 / NCFM).